The chain runs to 246 residues: 23S rRNA (guanosine-2'-O-)-methyltransferase RlmB (246 aa).

Positions 197, 217, and 226 each coordinate S-adenosyl-L-methionine.

The protein belongs to the class IV-like SAM-binding methyltransferase superfamily. RNA methyltransferase TrmH family. RlmB subfamily.

It localises to the cytoplasm. The enzyme catalyses guanosine(2251) in 23S rRNA + S-adenosyl-L-methionine = 2'-O-methylguanosine(2251) in 23S rRNA + S-adenosyl-L-homocysteine + H(+). Functionally, specifically methylates the ribose of guanosine 2251 in 23S rRNA. This Haemophilus influenzae (strain ATCC 51907 / DSM 11121 / KW20 / Rd) protein is 23S rRNA (guanosine-2'-O-)-methyltransferase RlmB.